A 614-amino-acid polypeptide reads, in one-letter code: Sodium- and chloride-dependent betaine transporter (614 aa).

Over 1–44 the chain is Cytoplasmic; it reads MDRKVTVHEDGCPVVSWVPEEGEMMDQKDKDQVKDRGQWTNKME. 3 helical membrane-spanning segments follow: residues 45–65, 73–92, and 117–137; these read FVLSVAGEIIGLGNVWRFPYL, AFFIPYFIFFFSCGIPVFFL, and GIGMASVVIESYLNIYYIIIL. Topologically, residues 138–210 are extracellular; the sequence is AWALFYLFSS…SGIHDLGSLR (73 aa). Residues Asn-171 and Asn-183 are each glycosylated (N-linked (GlcNAc...) asparagine). Transmembrane regions (helical) follow at residues 211–229, 238–255, 291–308, 320–341, 374–393, 423–441, 458–478, 499–518, and 538–556; these read WELALCLLLAWIICYFCIW, VVYFTATFPYLMLIILLI, IFFSFAICQGCLTALGSY, IALCFLNSATSFVAGFVVFSIL, MPLSQLWSCLFFLMLLFLGL, LLILAVAIVCYLMGLLLVT, GICLLFLSLFEVICIGWVYGA, ISWLFLTPGLCLATFFFSLS, and IGWLLAFSSMACVPLFIII. Residues 557–614 are Cytoplasmic-facing; the sequence is TLLKTQGSFKKRLQRLITPDPSLPQPGRRSPQDGSSAQNCSTSPVKQELIAWEKETHL. Positions 574–600 are disordered; sequence TPDPSLPQPGRRSPQDGSSAQNCSTSP. A Phosphoserine modification is found at Ser-586. Residues 588-600 show a composition bias toward polar residues; the sequence is QDGSSAQNCSTSP.

It belongs to the sodium:neurotransmitter symporter (SNF) (TC 2.A.22) family. SLC6A12 subfamily. In terms of assembly, interacts with LIN7C.

The protein resides in the basolateral cell membrane. It is found in the cell membrane. It catalyses the reaction 4-aminobutanoate(out) + chloride(out) + 3 Na(+)(out) = 4-aminobutanoate(in) + chloride(in) + 3 Na(+)(in). It carries out the reaction glycine betaine(out) + 2 chloride(out) + 3 Na(+)(out) = glycine betaine(in) + 2 chloride(in) + 3 Na(+)(in). Its function is as follows. Transporter that mediates cellular uptake of betaine and GABA in a sodium- and chloride-dependent process. May have a role in regulation of GABAergic transmission in the brain through the reuptake of GABA into presynaptic terminals, as well as in osmotic regulation. Probably also involved in renal and hepatic osmotic regulation. The chain is Sodium- and chloride-dependent betaine transporter (Slc6a12) from Rattus norvegicus (Rat).